Here is a 187-residue protein sequence, read N- to C-terminus: T-cell receptor-associated transmembrane adapter 1 (187 aa).

Over Met-1–Cys-7 the chain is Extracellular. Residues Pro-8–Phe-28 traverse the membrane as a helical; Signal-anchor for type III membrane protein segment. The Cytoplasmic segment spans residues Asn-29–Ile-187. Residue Ser-46 is modified to Phosphoserine. Tyr-80 bears the Phosphotyrosine mark. The interval Tyr-80–Met-83 is interaction with PIK3R1. Positions Ser-117 to Asp-138 are disordered.

Homodimer; disulfide-linked. Interacts with CD3Z. When phosphorylated, interacts with PIK3R1. Post-translationally, phosphorylated on tyrosines upon TCR activation. Present in T-cells (at protein level).

Its subcellular location is the cell membrane. Stabilizes the TCR (T-cell antigen receptor)/CD3 complex at the surface of T-cells. This chain is T-cell receptor-associated transmembrane adapter 1 (Trat1), found in Mus musculus (Mouse).